Reading from the N-terminus, the 359-residue chain is Protein LpfD (359 aa).

An N-terminal signal peptide occupies residues 1–24; it reads MLKKLIMFTGLLGGSVLFSGQALA.

It belongs to the fimbrial protein family.

It localises to the fimbrium. The chain is Protein LpfD (lpfD) from Salmonella typhimurium (strain LT2 / SGSC1412 / ATCC 700720).